The following is a 284-amino-acid chain: Pantothenate synthetase (284 aa).

ATP is bound at residue 30 to 37 (MGALHDGH). Catalysis depends on H37, which acts as the Proton donor. Residue Q61 participates in (R)-pantoate binding. Residue Q61 coordinates beta-alanine. 147–150 (GEKD) lines the ATP pocket. Q153 contributes to the (R)-pantoate binding site. ATP contacts are provided by residues V176 and 184–187 (KSSR).

Belongs to the pantothenate synthetase family. As to quaternary structure, homodimer.

The protein resides in the cytoplasm. It carries out the reaction (R)-pantoate + beta-alanine + ATP = (R)-pantothenate + AMP + diphosphate + H(+). The protein operates within cofactor biosynthesis; (R)-pantothenate biosynthesis; (R)-pantothenate from (R)-pantoate and beta-alanine: step 1/1. In terms of biological role, catalyzes the condensation of pantoate with beta-alanine in an ATP-dependent reaction via a pantoyl-adenylate intermediate. The polypeptide is Pantothenate synthetase (Chloroherpeton thalassium (strain ATCC 35110 / GB-78)).